The primary structure comprises 213 residues: Glycerol-3-phosphate acyltransferase (213 aa).

The next 6 helical transmembrane spans lie at 3-23 (IIILLLIASYLLGAIPFGLWI), 48-68 (ILGVKAGIAVFIFDLLKGTLA), 71-91 (LPLIFHINGVSPLIFGLLAVI), 119-139 (PFFLLYLLVIFILVLWLFSMI), 144-164 (VVAAIFALLGILIFPSFGFIL), and 165-185 (TSYDLLFSIIIFALAIIIIFR).

It belongs to the PlsY family. In terms of assembly, probably interacts with PlsX.

Its subcellular location is the cell membrane. It catalyses the reaction an acyl phosphate + sn-glycerol 3-phosphate = a 1-acyl-sn-glycero-3-phosphate + phosphate. The protein operates within lipid metabolism; phospholipid metabolism. In terms of biological role, catalyzes the transfer of an acyl group from acyl-phosphate (acyl-PO(4)) to glycerol-3-phosphate (G3P) to form lysophosphatidic acid (LPA). This enzyme utilizes acyl-phosphate as fatty acyl donor, but not acyl-CoA or acyl-ACP. In Lactococcus lactis subsp. cremoris (strain SK11), this protein is Glycerol-3-phosphate acyltransferase.